A 45-amino-acid chain; its full sequence is Large ribosomal subunit protein bL34 (45 aa).

A disordered region spans residues 1-45; it reads MTKRTFGGTSRKRKRVSGFRVRMRSHTGRRVVRTRRKRGRSRLTV. Positions 10–45 are enriched in basic residues; it reads SRKRKRVSGFRVRMRSHTGRRVVRTRRKRGRSRLTV.

Belongs to the bacterial ribosomal protein bL34 family.

This chain is Large ribosomal subunit protein bL34, found in Prochlorococcus marinus (strain NATL2A).